The following is a 708-amino-acid chain: Leukotoxin translocation ATP-binding protein LktB (708 aa).

A Peptidase C39 domain is found at 1–126; it reads MEANHQRNDL…ACYQGQLILV (126 aa). Residues 155 to 437 form the ABC transmembrane type-1 domain; the sequence is FLETLIVSIF…LAQLWQDFQQ (283 aa). The next 5 membrane-spanning stretches (helical) occupy residues 159-179, 192-212, 270-290, 296-316, and 389-409; these read LIVS…FQVV, LNII…LSGL, ALTS…MWYY, LVIL…SPIL, and VMVI…LSIG. In terms of domain architecture, ABC transporter spans 469–704; that stretch reads ISFKNIRFRY…SNGLYSYLHQ (236 aa). 503-510 contributes to the ATP binding site; it reads GRSGSGKS.

The protein belongs to the ABC transporter superfamily. Protein-1 exporter (TC 3.A.1.109) family. As to quaternary structure, homodimer.

The protein resides in the cell inner membrane. It carries out the reaction ATP + H2O + proteinSide 1 = ADP + phosphate + proteinSide 2.. Functionally, part of the ABC transporter complex LktBD involved in leukotoxin export. Transmembrane domains (TMD) form a pore in the inner membrane and the ATP-binding domain (NBD) is responsible for energy generation. This chain is Leukotoxin translocation ATP-binding protein LktB (lktB), found in Mannheimia haemolytica (Pasteurella haemolytica).